The chain runs to 593 residues: V-type sodium ATPase catalytic subunit A (593 aa).

232-239 (GPFGAGKT) contacts ATP.

It belongs to the ATPase alpha/beta chains family.

It carries out the reaction 4 Na(+)(in) + ATP + H2O = 4 Na(+)(out) + ADP + phosphate + H(+). Functionally, involved in ATP-driven sodium extrusion. In Enterococcus hirae (strain ATCC 9790 / DSM 20160 / JCM 8729 / LMG 6399 / NBRC 3181 / NCIMB 6459 / NCDO 1258 / NCTC 12367 / WDCM 00089 / R), this protein is V-type sodium ATPase catalytic subunit A (ntpA).